The sequence spans 275 residues: Chlorobenzene dihydrodiol dehydrogenase (275 aa).

Tyr-155 acts as the Proton acceptor in catalysis.

It belongs to the short-chain dehydrogenases/reductases (SDR) family.

The catalysed reaction is (1R,2R)-3-chlorocyclohexa-3,5-diene-1,2-diol + NAD(+) = 3-chlorocatechol + NADH + H(+). The protein operates within aromatic compound metabolism. Functionally, can transform various dihydrodiols of chlorobenzenes and chlorotoluenes into the respective catechols. This is Chlorobenzene dihydrodiol dehydrogenase from Cupriavidus sp. (strain PS12).